A 492-amino-acid chain; its full sequence is uncharacterized protein (492 aa).

The next 13 membrane-spanning stretches (helical) occupy residues 67 to 87 (VAIM…GGWL), 88 to 108 (ADRV…IMFG), 110 to 130 (IALA…LIIV), 157 to 177 (GFSI…LIVG), 185 to 205 (YHLG…VFAL), 232 to 252 (IGVI…VLTI), 255 to 275 (FIDL…IIMF), 294 to 314 (LFIG…ILAV), 333 to 353 (WFQS…AWLW), 367 to 387 (FSIG…PAMQ), 392 to 412 (LVSP…ELCL), 434 to 454 (SMWF…AGLF), and 464 to 484 (GTIG…SPVI).

Belongs to the major facilitator superfamily. Proton-dependent oligopeptide transporter (POT/PTR) (TC 2.A.17) family.

It is found in the cell membrane. This is an uncharacterized protein from Bacillus subtilis (strain 168).